The sequence spans 65 residues: SPbeta prophage-derived uncharacterized protein YopU (65 aa).

This chain is SPbeta prophage-derived uncharacterized protein YopU (yopU), found in Bacillus subtilis (strain 168).